The primary structure comprises 593 residues: UvrABC system protein C (593 aa).

The GIY-YIG domain maps to 14–91 (DKPGCYLMKN…IKEHDPRYNV (78 aa)). The 36-residue stretch at 196–231 (EEMKQTLTEKMLQAAENMEFERAKEYRDQIKSIEAV) folds into the UVR domain.

This sequence belongs to the UvrC family. Interacts with UvrB in an incision complex.

It localises to the cytoplasm. In terms of biological role, the UvrABC repair system catalyzes the recognition and processing of DNA lesions. UvrC both incises the 5' and 3' sides of the lesion. The N-terminal half is responsible for the 3' incision and the C-terminal half is responsible for the 5' incision. This Brevibacillus brevis (strain 47 / JCM 6285 / NBRC 100599) protein is UvrABC system protein C.